Here is a 124-residue protein sequence, read N- to C-terminus: NADH dehydrogenase [ubiquinone] 1 alpha subcomplex subunit 6 (124 aa).

Belongs to the complex I LYR family.

It is found in the mitochondrion inner membrane. In terms of biological role, accessory subunit of the mitochondrial membrane respiratory chain NADH dehydrogenase (Complex I), that is believed to be not involved in catalysis. Complex I functions in the transfer of electrons from NADH to the respiratory chain. The immediate electron acceptor for the enzyme is believed to be ubiquinone. The sequence is that of NADH dehydrogenase [ubiquinone] 1 alpha subcomplex subunit 6 (ndufa6) from Dictyostelium discoideum (Social amoeba).